The sequence spans 457 residues: Siroheme synthase (457 aa).

The segment at 1–204 (MDHLPIFCQL…ADEKAVNATT (204 aa)) is precorrin-2 dehydrogenase /sirohydrochlorin ferrochelatase. NAD(+) contacts are provided by residues 22–23 (DV) and 43–44 (LT). Position 128 is a phosphoserine (Ser128). The uroporphyrinogen-III C-methyltransferase stretch occupies residues 216 to 457 (GEVVLVGAGP…RDKLNWFSSH (242 aa)). Pro225 is an S-adenosyl-L-methionine binding site. The active-site Proton acceptor is Asp248. The active-site Proton donor is the Lys270. S-adenosyl-L-methionine-binding positions include 301-303 (GGD), Ile306, 331-332 (TA), Met382, and Gly411.

In the N-terminal section; belongs to the precorrin-2 dehydrogenase / sirohydrochlorin ferrochelatase family. It in the C-terminal section; belongs to the precorrin methyltransferase family.

It catalyses the reaction uroporphyrinogen III + 2 S-adenosyl-L-methionine = precorrin-2 + 2 S-adenosyl-L-homocysteine + H(+). The catalysed reaction is precorrin-2 + NAD(+) = sirohydrochlorin + NADH + 2 H(+). The enzyme catalyses siroheme + 2 H(+) = sirohydrochlorin + Fe(2+). The protein operates within cofactor biosynthesis; adenosylcobalamin biosynthesis; precorrin-2 from uroporphyrinogen III: step 1/1. Its pathway is cofactor biosynthesis; adenosylcobalamin biosynthesis; sirohydrochlorin from precorrin-2: step 1/1. It participates in porphyrin-containing compound metabolism; siroheme biosynthesis; precorrin-2 from uroporphyrinogen III: step 1/1. It functions in the pathway porphyrin-containing compound metabolism; siroheme biosynthesis; siroheme from sirohydrochlorin: step 1/1. The protein operates within porphyrin-containing compound metabolism; siroheme biosynthesis; sirohydrochlorin from precorrin-2: step 1/1. In terms of biological role, multifunctional enzyme that catalyzes the SAM-dependent methylations of uroporphyrinogen III at position C-2 and C-7 to form precorrin-2 via precorrin-1. Then it catalyzes the NAD-dependent ring dehydrogenation of precorrin-2 to yield sirohydrochlorin. Finally, it catalyzes the ferrochelation of sirohydrochlorin to yield siroheme. This Salmonella arizonae (strain ATCC BAA-731 / CDC346-86 / RSK2980) protein is Siroheme synthase.